The primary structure comprises 843 residues: Protein P (843 aa).

Residues 1–177 (MPLSYQHFRK…FCGSPYSWEQ (177 aa)) are terminal protein domain (TP). The interval 178-346 (DLQHGRLVFQ…YCLCHIVNLI (169 aa)) is spacer. Disordered stretches follow at residues 220–269 (KSRL…HNCA) and 291–316 (TSKG…RSRS). Residues 347 to 690 (EDWGPCTEHG…YLNLYPVARQ (344 aa)) are polymerase/reverse transcriptase domain (RT). Residues 357–600 (EHRIRTPRTP…YSLNFMGYVI (244 aa)) form the Reverse transcriptase domain. The Mg(2+) site is built by D429, D551, and D552.

Belongs to the hepadnaviridae P protein family.

The enzyme catalyses DNA(n) + a 2'-deoxyribonucleoside 5'-triphosphate = DNA(n+1) + diphosphate. It catalyses the reaction Endonucleolytic cleavage to 5'-phosphomonoester.. Its activity is regulated as follows. Activated by host HSP70 and HSP40 in vitro to be able to bind the epsilon loop of the pgRNA. Because deletion of the RNase H region renders the protein partly chaperone-independent, the chaperones may be needed indirectly to relieve occlusion of the RNA-binding site by this domain. Inhibited by several reverse-transcriptase inhibitors: Lamivudine, Adefovir and Entecavir. Functionally, multifunctional enzyme that converts the viral RNA genome into dsDNA in viral cytoplasmic capsids. This enzyme displays a DNA polymerase activity that can copy either DNA or RNA templates, and a ribonuclease H (RNase H) activity that cleaves the RNA strand of RNA-DNA heteroduplexes in a partially processive 3'- to 5'-endonucleasic mode. Neo-synthesized pregenomic RNA (pgRNA) are encapsidated together with the P protein, and reverse-transcribed inside the nucleocapsid. Initiation of reverse-transcription occurs first by binding the epsilon loop on the pgRNA genome, and is initiated by protein priming, thereby the 5'-end of (-)DNA is covalently linked to P protein. Partial (+)DNA is synthesized from the (-)DNA template and generates the relaxed circular DNA (RC-DNA) genome. After budding and infection, the RC-DNA migrates in the nucleus, and is converted into a plasmid-like covalently closed circular DNA (cccDNA). The activity of P protein does not seem to be necessary for cccDNA generation, and is presumably released from (+)DNA by host nuclear DNA repair machinery. The protein is Protein P of Homo sapiens (Human).